Consider the following 104-residue polypeptide: Large ribosomal subunit protein uL24 (104 aa).

Belongs to the universal ribosomal protein uL24 family. In terms of assembly, part of the 50S ribosomal subunit.

Its function is as follows. One of two assembly initiator proteins, it binds directly to the 5'-end of the 23S rRNA, where it nucleates assembly of the 50S subunit. Functionally, one of the proteins that surrounds the polypeptide exit tunnel on the outside of the subunit. This Shigella dysenteriae serotype 1 (strain Sd197) protein is Large ribosomal subunit protein uL24.